The chain runs to 538 residues: CTP synthase (538 aa).

The interval 1–270 (MSRTKFIFVT…DEVVLKTMGM (270 aa)) is amidoligase domain. S15 lines the CTP pocket. Position 15 (S15) interacts with UTP. 16–21 (SLGKGV) is an ATP binding site. Y56 provides a ligand contact to L-glutamine. D73 provides a ligand contact to ATP. Mg(2+) contacts are provided by D73 and E143. CTP-binding positions include 150-152 (DIE), 190-195 (KTKPTQ), and K226. Residues 190-195 (KTKPTQ) and K226 each bind UTP. A Glutamine amidotransferase type-1 domain is found at 295-537 (QIAVVGKYIS…IRASVKYSKK (243 aa)). G357 is an L-glutamine binding site. C384 (nucleophile; for glutamine hydrolysis) is an active-site residue. Residues 385-388 (LGMQ), E408, and R465 each bind L-glutamine. Catalysis depends on residues H510 and E512.

Belongs to the CTP synthase family. In terms of assembly, homotetramer.

The enzyme catalyses UTP + L-glutamine + ATP + H2O = CTP + L-glutamate + ADP + phosphate + 2 H(+). It catalyses the reaction L-glutamine + H2O = L-glutamate + NH4(+). It carries out the reaction UTP + NH4(+) + ATP = CTP + ADP + phosphate + 2 H(+). The protein operates within pyrimidine metabolism; CTP biosynthesis via de novo pathway; CTP from UDP: step 2/2. Allosterically activated by GTP, when glutamine is the substrate; GTP has no effect on the reaction when ammonia is the substrate. The allosteric effector GTP functions by stabilizing the protein conformation that binds the tetrahedral intermediate(s) formed during glutamine hydrolysis. Inhibited by the product CTP, via allosteric rather than competitive inhibition. Functionally, catalyzes the ATP-dependent amination of UTP to CTP with either L-glutamine or ammonia as the source of nitrogen. Regulates intracellular CTP levels through interactions with the four ribonucleotide triphosphates. The protein is CTP synthase of Leptospira interrogans serogroup Icterohaemorrhagiae serovar copenhageni (strain Fiocruz L1-130).